Consider the following 511-residue polypeptide: Cytochrome P450 77A2 (511 aa).

C456 lines the heme pocket.

It belongs to the cytochrome P450 family. Heme is required as a cofactor.

The polypeptide is Cytochrome P450 77A2 (CYP77A2) (Solanum melongena (Eggplant)).